We begin with the raw amino-acid sequence, 557 residues long: Inositol-3-phosphate synthase 1 (557 aa).

NAD(+) contacts are provided by Gly67, Gly68, Asn69, Asn70, Asp141, Ser177, Val178, Gln188, Arg191, Thr228, Ala229, Asn230, Thr231, Gly278, Ser279, Asp303, Ser306, Asn337, Asn338, Asp339, and Lys352. Residue Ser279 is modified to Phosphoserine. Ser357 carries the phosphoserine modification. Positions 390, 391, 419, and 420 each coordinate NAD(+). The tract at residues 514–557 is disordered; sequence GIKPEEVKATSPLPCKKESTPATNGCTGDANGHTQAPTPELSTA. The residue at position 524 (Ser524) is a Phosphoserine. Residues 533-557 show a composition bias toward polar residues; the sequence is TPATNGCTGDANGHTQAPTPELSTA.

Belongs to the myo-inositol 1-phosphate synthase family. Homotrimer. The cofactor is NAD(+). In terms of processing, phosphorylation at Ser-524 does not appear to affect enzyme activity, and is detected in brain and testis. Expressed in testis, brain and epididymis (at protein level). Moderately expressed in brain, lung, liver, and kidney. Low expression in heart and spleen. Very low expression in skeletal muscle. In terms of tissue distribution, expressed in testis, spleen, heart, brainstem, hippocampus, cerebellum, cortex and amygdala. Absent or very lowly expressed in intestine, lung and muscle. As to expression, expressed in intestine, lung, liver, muscle, testis, spleen, brainstem, hippocampus, cerebellum, cortex and amygdala. Absent or lowly expressed in heart and kidney. Expressed in intestine (at protein level).

Its subcellular location is the cytoplasm. It carries out the reaction D-glucose 6-phosphate = 1D-myo-inositol 3-phosphate. Its pathway is polyol metabolism; myo-inositol biosynthesis; myo-inositol from D-glucose 6-phosphate: step 1/2. Its activity is regulated as follows. Inhibited by 2-deoxyglucitol 6-phosphate (dgtolP) and 2-deoxy-D-glucose 6-phosphate. Inhibited by copper, mercury, cadmium, zinc and copper ions. Activated by potassium and ammonium ions. Functionally, key enzyme in myo-inositol biosynthesis pathway that catalyzes the conversion of glucose 6-phosphate to 1-myo-inositol 1-phosphate in a NAD-dependent manner. Rate-limiting enzyme in the synthesis of all inositol-containing compounds. Key enzyme in myo-inositol biosynthesis pathway that catalyzes the conversion of glucose 6-phosphate to 1-myo-inositol 1-phosphate in a NAD-dependent manner. In terms of biological role, competitively inhibits the function of isoform 1, presumably by competing for NAD cofactor. The protein is Inositol-3-phosphate synthase 1 (Isyna1) of Rattus norvegicus (Rat).